The sequence spans 67 residues: DNA-directed RNA polymerase subunit omega (67 aa).

The protein belongs to the RNA polymerase subunit omega family. As to quaternary structure, the RNAP catalytic core consists of 2 alpha, 1 beta, 1 beta' and 1 omega subunit. When a sigma factor is associated with the core the holoenzyme is formed, which can initiate transcription.

The catalysed reaction is RNA(n) + a ribonucleoside 5'-triphosphate = RNA(n+1) + diphosphate. Promotes RNA polymerase assembly. Latches the N- and C-terminal regions of the beta' subunit thereby facilitating its interaction with the beta and alpha subunits. This is DNA-directed RNA polymerase subunit omega from Bordetella avium (strain 197N).